The primary structure comprises 349 residues: tRNA pseudouridine synthase D (349 aa).

F26 is a binding site for substrate. The active-site Nucleophile is the D79. N128 lines the substrate pocket. The TRUD domain occupies 154-302; it reads GVPNYFGSQR…VEGSRRAVLL (149 aa). A substrate-binding site is contributed by F328.

Belongs to the pseudouridine synthase TruD family.

The enzyme catalyses uridine(13) in tRNA = pseudouridine(13) in tRNA. Functionally, responsible for synthesis of pseudouridine from uracil-13 in transfer RNAs. The sequence is that of tRNA pseudouridine synthase D from Yersinia pseudotuberculosis serotype IB (strain PB1/+).